A 221-amino-acid chain; its full sequence is Aspartic protease inhibitor 1 (221 aa).

Residues 1–23 (MMKCLFFLCLCLFPILVFSSTFT) form the signal peptide. Positions 24–32 (SQNPINLPS) are excised as a propeptide. The short motif at 26–31 (NPINLP) is the Vacuolar targeting signal element. The N-linked (GlcNAc...) asparagine glycan is linked to Asn-51. 2 disulfide bridges follow: Cys-80–Cys-125 and Cys-174–Cys-186.

It belongs to the protease inhibitor I3 (leguminous Kunitz-type inhibitor) family. Tubers, young leaves and flower bud. Not detected in root, stem or mature leaves.

The protein localises to the vacuole. Its function is as follows. Inhibitor of cathepsin D (aspartic protease). May also inhibit trypsin and chymotrypsin (serine proteases). Protects the plant by inhibiting proteases of invading organisms. This Solanum tuberosum (Potato) protein is Aspartic protease inhibitor 1.